The chain runs to 309 residues: Ribonuclease Z (309 aa).

Residues His63, His65, Asp67, His68, His145, Asp216, and His274 each coordinate Zn(2+). Asp67 acts as the Proton acceptor in catalysis.

Belongs to the RNase Z family. In terms of assembly, homodimer. The cofactor is Zn(2+).

The catalysed reaction is Endonucleolytic cleavage of RNA, removing extra 3' nucleotides from tRNA precursor, generating 3' termini of tRNAs. A 3'-hydroxy group is left at the tRNA terminus and a 5'-phosphoryl group is left at the trailer molecule.. Zinc phosphodiesterase, which displays some tRNA 3'-processing endonuclease activity. Probably involved in tRNA maturation, by removing a 3'-trailer from precursor tRNA. This chain is Ribonuclease Z, found in Streptococcus suis (strain 98HAH33).